A 93-amino-acid chain; its full sequence is Putative pterin-4-alpha-carbinolamine dehydratase (93 aa).

This sequence belongs to the pterin-4-alpha-carbinolamine dehydratase family.

The enzyme catalyses (4aS,6R)-4a-hydroxy-L-erythro-5,6,7,8-tetrahydrobiopterin = (6R)-L-erythro-6,7-dihydrobiopterin + H2O. This chain is Putative pterin-4-alpha-carbinolamine dehydratase, found in Thermomicrobium roseum (strain ATCC 27502 / DSM 5159 / P-2).